The sequence spans 294 residues: Nucleotide-binding protein DICTH_1001 (294 aa).

10-17 lines the ATP pocket; it reads GLSGAGKS. 61 to 64 lines the GTP pocket; sequence DIRT.

The protein belongs to the RapZ-like family.

In terms of biological role, displays ATPase and GTPase activities. The protein is Nucleotide-binding protein DICTH_1001 of Dictyoglomus thermophilum (strain ATCC 35947 / DSM 3960 / H-6-12).